We begin with the raw amino-acid sequence, 402 residues long: MTTATDGFADGRLRVLVLGSTGSIGTQALEVIAANPDRFEVVGLAAGGSNLDTLRRQRAETGVTEIAIADERAAQLAGDIAYQEPDAVTRLVEETEADVVLNALVGALGLRPTLAALASGARLALANKESLVAGGPLVLQAAQPGQIVPVDSEHSALAQCLRAGTPDEVAKLVLTASGGPFRGWSAADLQEVTPEQAGAHPTWSMGPMNTLNSASLVNKGLELIETHLLFGISYERIEVVVHPQSIVHSMVTFVDGSTIAQASPPDMKLPISLALGWPRRVPGAARYCDFSQAQTWEFEPLDDEVFPAVELARHAGETGGCMTAVYNAANEEAAAAFLAGRISFPAIVGTIADVLHAADQWAVSPANVDDVLDAQRWARQRAQRAIAKASPAGACEKVSGLA.

7 residues coordinate NADPH: Thr-21, Gly-22, Ser-23, Ile-24, Gly-47, Asn-50, and Asn-127. Residue Lys-128 participates in 1-deoxy-D-xylulose 5-phosphate binding. NADPH is bound at residue Glu-129. Asp-151 contacts Mn(2+). 1-deoxy-D-xylulose 5-phosphate contacts are provided by Ser-152, Glu-153, Ser-177, and His-200. Residue Glu-153 participates in Mn(2+) binding. Position 206 (Gly-206) interacts with NADPH. 4 residues coordinate 1-deoxy-D-xylulose 5-phosphate: Ser-213, Asn-218, Lys-219, and Glu-222. Position 222 (Glu-222) interacts with Mn(2+).

Belongs to the DXR family. The cofactor is Mg(2+). Requires Mn(2+) as cofactor.

It carries out the reaction 2-C-methyl-D-erythritol 4-phosphate + NADP(+) = 1-deoxy-D-xylulose 5-phosphate + NADPH + H(+). It functions in the pathway isoprenoid biosynthesis; isopentenyl diphosphate biosynthesis via DXP pathway; isopentenyl diphosphate from 1-deoxy-D-xylulose 5-phosphate: step 1/6. In terms of biological role, catalyzes the NADPH-dependent rearrangement and reduction of 1-deoxy-D-xylulose-5-phosphate (DXP) to 2-C-methyl-D-erythritol 4-phosphate (MEP). This chain is 1-deoxy-D-xylulose 5-phosphate reductoisomerase, found in Mycobacterium ulcerans (strain Agy99).